Reading from the N-terminus, the 88-residue chain is Putative membrane protein insertion efficiency factor (88 aa).

The segment at 68-88 is disordered; that stretch reads VPPPNSDTRARGEADARSHRL. Over residues 75–88 the composition is skewed to basic and acidic residues; it reads TRARGEADARSHRL.

Belongs to the UPF0161 family.

It is found in the cell inner membrane. Functionally, could be involved in insertion of integral membrane proteins into the membrane. The chain is Putative membrane protein insertion efficiency factor from Burkholderia cenocepacia (strain ATCC BAA-245 / DSM 16553 / LMG 16656 / NCTC 13227 / J2315 / CF5610) (Burkholderia cepacia (strain J2315)).